A 722-amino-acid chain; its full sequence is Probable acyl-activating enzyme 16, chloroplastic (722 aa).

A chloroplast-targeting transit peptide spans 1 to 47; that stretch reads MASTSLGASILVSHCSSAPEFQVSGMRLVFGYKAFGCRTSRRGFRVR.

Belongs to the ATP-dependent AMP-binding enzyme family.

The protein localises to the plastid. It localises to the chloroplast. May be involved in the activation of fatty acids to acyl-carrier-protein. The sequence is that of Probable acyl-activating enzyme 16, chloroplastic (AAE16) from Arabidopsis thaliana (Mouse-ear cress).